A 648-amino-acid polypeptide reads, in one-letter code: Probable potassium transport system protein Kup 1 (648 aa).

The disordered stretch occupies residues M1–H31. The span at G10–Q26 shows a compositional bias: low complexity. The next 12 membrane-spanning stretches (helical) occupy residues L39 to L59, L73 to F93, I130 to A150, P165 to I185, V193 to A213, F243 to M263, W275 to I295, L317 to F337, I364 to F384, Y394 to F414, A421 to A441, and I446 to T466.

The protein belongs to the HAK/KUP transporter (TC 2.A.72) family.

The protein resides in the cell inner membrane. It carries out the reaction K(+)(in) + H(+)(in) = K(+)(out) + H(+)(out). In terms of biological role, transport of potassium into the cell. Likely operates as a K(+):H(+) symporter. This is Probable potassium transport system protein Kup 1 from Novosphingobium aromaticivorans (strain ATCC 700278 / DSM 12444 / CCUG 56034 / CIP 105152 / NBRC 16084 / F199).